The chain runs to 180 residues: Zinc finger protein 740 (180 aa).

Residues 1–11 (MMLSQIASKQA) show a composition bias toward polar residues. The disordered stretch occupies residues 1–62 (MMLSQIASKQ…KEDDSLAEAS (62 aa)). Lys9 is covalently cross-linked (Glycyl lysine isopeptide (Lys-Gly) (interchain with G-Cter in SUMO2)). Phosphoserine is present on Ser19. Residues 31 to 56 (CKPRFDLSSKGHRKDSDKSRNRKEDD) show a composition bias toward basic and acidic residues. 2 C2H2-type zinc fingers span residues 88-110 (FICE…VLIH) and 116-138 (FECD…KRVH). The C2H2-type 3; atypical zinc-finger motif lies at 144-166 (YQCERCHQCFSRTDRLLRHKRMC).

The protein belongs to the krueppel C2H2-type zinc-finger protein family.

The protein resides in the nucleus. Its function is as follows. May be involved in transcriptional regulation. The chain is Zinc finger protein 740 (Znf740) from Mus musculus (Mouse).